The following is a 352-amino-acid chain: Serine/threonine-protein phosphatase 2A activator 2 (352 aa).

It belongs to the PTPA-type PPIase family.

The protein localises to the cytoplasm. It catalyses the reaction [protein]-peptidylproline (omega=180) = [protein]-peptidylproline (omega=0). Its function is as follows. PPIases accelerate the folding of proteins. It catalyzes the cis-trans isomerization of proline imidic peptide bonds in oligopeptides. Acts as a regulatory subunit for PP2A-like phosphatases modulating their activity or substrate specificity, probably by inducing a conformational change in the catalytic subunit, a direct target of the PPIase. Can reactivate inactive phosphatase PP2A-phosphatase methylesterase complexes (PP2Ai) in presence of ATP and Mg(2+) by dissociating the inactive form from the complex. This is Serine/threonine-protein phosphatase 2A activator 2 (rrd2) from Schizosaccharomyces pombe (strain 972 / ATCC 24843) (Fission yeast).